A 30-amino-acid chain; its full sequence is Trypsin inhibitor 7 (30 aa).

Cystine bridges form between Cys4-Cys21, Cys11-Cys23, and Cys17-Cys29.

This sequence belongs to the protease inhibitor I7 (squash-type serine protease inhibitor) family.

Its subcellular location is the secreted. In terms of biological role, strongly inhibits trypsin, weakly inhibits chymotrypsin. The chain is Trypsin inhibitor 7 from Cyclanthera pedata (Achocha).